The chain runs to 548 residues: CTL-like protein DDB_G0288717 (548 aa).

Residues 1 to 44 (MWAPEEDYKQPLLTNSRVANNGNNNNSNGRGGSSSPSTRLQPEH) are disordered. An N-linked (GlcNAc...) asparagine glycan is attached at asparagine 25. The chain crosses the membrane as a helical span at residues 52–72 (ILFTILFLLVIGGMAAISGIA). N-linked (GlcNAc...) asparagine glycosylation is present at asparagine 97. 4 consecutive transmembrane segments (helical) span residues 125-145 (DILI…IQLL), 151-171 (FFIY…GGLF), 184-204 (MIVG…IVYL), and 226-246 (PSVF…IAYW). Residue asparagine 273 is glycosylated (N-linked (GlcNAc...) asparagine). 2 helical membrane-spanning segments follow: residues 290–310 (NLMY…SAVF) and 350–370 (FGSL…AFML). N-linked (GlcNAc...) asparagine glycosylation occurs at asparagine 377. Helical transmembrane passes span 381 to 401 (KLVV…ESIV), 442 to 462 (FIGG…SALF), and 479 to 499 (IALS…IVGI). Asparagine 544 carries an N-linked (GlcNAc...) asparagine glycan.

Belongs to the CTL (choline transporter-like) family.

The protein localises to the membrane. In Dictyostelium discoideum (Social amoeba), this protein is CTL-like protein DDB_G0288717.